The sequence spans 164 residues: 3-isopropylmalate dehydratase small subunit (164 aa).

Belongs to the LeuD family. LeuD type 2 subfamily. In terms of assembly, heterodimer of LeuC and LeuD.

It catalyses the reaction (2R,3S)-3-isopropylmalate = (2S)-2-isopropylmalate. It participates in amino-acid biosynthesis; L-leucine biosynthesis; L-leucine from 3-methyl-2-oxobutanoate: step 2/4. In terms of biological role, catalyzes the isomerization between 2-isopropylmalate and 3-isopropylmalate, via the formation of 2-isopropylmaleate. The polypeptide is 3-isopropylmalate dehydratase small subunit (Lachnospira eligens (strain ATCC 27750 / DSM 3376 / VPI C15-48 / C15-B4) (Eubacterium eligens)).